The primary structure comprises 106 residues: Large ribosomal subunit protein bL21 (106 aa).

It belongs to the bacterial ribosomal protein bL21 family. Part of the 50S ribosomal subunit. Contacts protein L20.

Functionally, this protein binds to 23S rRNA in the presence of protein L20. The chain is Large ribosomal subunit protein bL21 from Thermosipho africanus (strain TCF52B).